Consider the following 311-residue polypeptide: Acetyl-coenzyme A carboxylase carboxyl transferase subunit alpha (311 aa).

In terms of domain architecture, CoA carboxyltransferase C-terminal spans 36–286; the sequence is ELKKEVERVY…VNYFLKSLEE (251 aa).

The protein belongs to the AccA family. Acetyl-CoA carboxylase is a heterohexamer composed of biotin carboxyl carrier protein (AccB), biotin carboxylase (AccC) and two subunits each of ACCase subunit alpha (AccA) and ACCase subunit beta (AccD).

It localises to the cytoplasm. The catalysed reaction is N(6)-carboxybiotinyl-L-lysyl-[protein] + acetyl-CoA = N(6)-biotinyl-L-lysyl-[protein] + malonyl-CoA. Its pathway is lipid metabolism; malonyl-CoA biosynthesis; malonyl-CoA from acetyl-CoA: step 1/1. In terms of biological role, component of the acetyl coenzyme A carboxylase (ACC) complex. First, biotin carboxylase catalyzes the carboxylation of biotin on its carrier protein (BCCP) and then the CO(2) group is transferred by the carboxyltransferase to acetyl-CoA to form malonyl-CoA. The protein is Acetyl-coenzyme A carboxylase carboxyl transferase subunit alpha of Wolinella succinogenes (strain ATCC 29543 / DSM 1740 / CCUG 13145 / JCM 31913 / LMG 7466 / NCTC 11488 / FDC 602W) (Vibrio succinogenes).